Consider the following 185-residue polypeptide: MINDIQKTAEGKMQRSVEVLKENLAKVRTGRAHTGLLDQVEVEYWGSMVPVSQVANVTLLDARTIGVKPFEGNMAAKVEKAIRDSNLGLNPAAVGDLIRVPMPMLTEERRKDLIKVVRGEAEEGRVSIRNVRRDANDHIKKLLKDKEISEDEARRGEEAVQKLTDKYITEADKLLTAKEEDLMAI.

Belongs to the RRF family.

The protein resides in the cytoplasm. In terms of biological role, responsible for the release of ribosomes from messenger RNA at the termination of protein biosynthesis. May increase the efficiency of translation by recycling ribosomes from one round of translation to another. The sequence is that of Ribosome-recycling factor from Neisseria meningitidis serogroup A / serotype 4A (strain DSM 15465 / Z2491).